A 697-amino-acid polypeptide reads, in one-letter code: Ion-translocating oxidoreductase complex subunit C (697 aa).

4Fe-4S ferredoxin-type domains are found at residues 366–397 and 407–436; these read AEMG…QQLY and KARN…VQYY. [4Fe-4S] cluster contacts are provided by Cys377, Cys380, Cys383, Cys387, Cys416, Cys419, Cys422, and Cys426. Residues 576–674 form a disordered region; it reads AQLESEPVKS…APEEDPRKAA (99 aa). Positions 581–596 are enriched in basic and acidic residues; sequence EPVKSESEAPEEDPRK. Positions 597–615 are enriched in low complexity; the sequence is AAVAAAIARVKAKKAAQAQ. Positions 619-634 are enriched in basic and acidic residues; that stretch reads EPVKSESEAPEEDPRK. Residues 635 to 653 are compositionally biased toward low complexity; that stretch reads AAVAAAIARVKAKKAAQAQ. The span at 657–672 shows a compositional bias: basic and acidic residues; that stretch reads EPVKSESEAPEEDPRK.

Belongs to the 4Fe4S bacterial-type ferredoxin family. RnfC subfamily. As to quaternary structure, the complex is composed of six subunits: RnfA, RnfB, RnfC, RnfD, RnfE and RnfG. Requires [4Fe-4S] cluster as cofactor.

The protein localises to the cell inner membrane. Functionally, part of a membrane-bound complex that couples electron transfer with translocation of ions across the membrane. The chain is Ion-translocating oxidoreductase complex subunit C from Yersinia enterocolitica serotype O:8 / biotype 1B (strain NCTC 13174 / 8081).